The sequence spans 336 residues: Cytoskeleton protein RodZ (336 aa).

Residues 1 to 111 (MNTEATHDQN…LGKRRKKRDG (111 aa)) lie on the Cytoplasmic side of the membrane. Residues 19-71 (LRNAREQLGLSQQAVAERLCLKVSTVRDIEEDKAPADLASTFLRGYIRSYARL) enclose the HTH cro/C1-type domain. The H-T-H motif DNA-binding region spans 30 to 49 (QQAVAERLCLKVSTVRDIEE). A helical; Signal-anchor for type II membrane protein membrane pass occupies residues 112–132 (WLMTFTWLVLFVVIGLSGAWW). Residues 133-336 (WQDHKAQQEE…TLNAEQSPAQ (204 aa)) are Periplasmic-facing. Polar residues predominate over residues 148–164 (DQSSAELNNNQSQSVPL). The tract at residues 148–248 (DQSSAELNNN…TDQAGVTTPA (101 aa)) is disordered. A compositionally biased stretch (low complexity) spans 165–201 (DTSTTTDQAMATTPTSPVDTTATNTQTPAATTAPSPT). Positions 202–217 (VDSQQNAVVPPSQANV) are enriched in polar residues. Over residues 219 to 236 (TAATPAPAATTMPDGAAP) the composition is skewed to low complexity.

The protein belongs to the RodZ family.

The protein resides in the cell inner membrane. Cytoskeletal protein that is involved in cell-shape control through regulation of the length of the long axis. This Escherichia coli (strain SMS-3-5 / SECEC) protein is Cytoskeleton protein RodZ.